A 299-amino-acid polypeptide reads, in one-letter code: Circadian clock oscillator protein KaiA (299 aa).

Residues 1–135 (MQSPLSLCLF…LHLGPICTLP (135 aa)) are psR domain, binds oxidized quinones. The region spanning 1–169 (MQSPLSLCLF…RLADKLKERL (169 aa)) is the KaiA N-terminal domain. The flexible linker stretch occupies residues 170-178 (GYLGVYYKR). The 109-residue stretch at 179–287 (KPSHFYRNFS…GEMYRRSIPR (109 aa)) folds into the KaiA C-terminal domain.

Belongs to the KaiA family. Homodimer. The KaiABC1 complex composition changes during the circadian cycle to control KaiC1 phosphorylation. Complexes KaiC1(6), KaiA(2-4):KaiC1(6), KaiB(6):KaiC1(6) and KaiC1(6):KaiB(6):KaiA(12) are among the most important forms, many form cooperatively. KaiA and CikA bind to the same region of the KaiB(fs) form and therefore compete. Interacts with KaiC1 but not KaiC2 or KaiC3. Interacts with itself, not seen to interact with other Kai proteins.

In terms of biological role, key component of the KaiABC oscillator complex, which constitutes the main circadian regulator in cyanobacteria. Complex composition changes during the circadian cycle to control KaiC phosphorylation. KaiA stimulates KaiC autophosphorylation, while KaiB sequesters KaiA, leading to KaiC autodephosphorylation. KaiA binding to the KaiC CII domain during the subjective day yields KaiA(2-4):KaiC(6) complexes which stimulate KaiC autophosphorylation. Phospho-Ser-431 KaiC accumulation triggers binding of KaiB during the subjective night to form the KaiB(6):KaiC(6) complex, leading to changes in the output regulators CikA and SasA. KaiB(6):KaiC(6) formation exposes a site for KaiA binding on KaiB that sequesters KaiA from KaiC's CII domain, making the KaiC(6):KaiB(6):KaiA(12) complex resulting in KaiC autodephosphorylation. Complete dephosphorylation of KaiC leads to dissociation of KaiA(2):KaiB(1), completing 1 cycle of the Kai oscillator. Component of the oscillator and circadian clock in this organism, enhances fitness in a rhythmic environment. Stimulates KaiC1 to autophosphorylate, has no effect on the kinase activity of KaiC2 or KaiC3. Functionally, binds oxidized quinones via the N-terminal PsR domain, allowing it to sense redox changes and possibly mediate clock input. This is Circadian clock oscillator protein KaiA from Synechocystis sp. (strain ATCC 27184 / PCC 6803 / Kazusa).